The sequence spans 194 residues: Probable transcription factor At4g00130 (194 aa).

Belongs to the GeBP family.

This Arabidopsis thaliana (Mouse-ear cress) protein is Probable transcription factor At4g00130.